The following is a 383-amino-acid chain: Glutaminyl-peptide cyclotransferase-like protein (383 aa).

The disordered stretch occupies residues 1 to 25; sequence MPSGGRGRPRLQVGERSLLERPSPP. A helical transmembrane segment spans residues 35 to 57; that stretch reads LLPQLLLALTVASVFYTIWRIWH. A disulfide bridge links cysteine 168 with cysteine 192. Aspartate 187 contacts Zn(2+). Glutamate 226 (proton acceptor) is an active-site residue. A Zn(2+)-binding site is contributed by glutamate 227. The active-site Proton acceptor is aspartate 270. Histidine 352 provides a ligand contact to Zn(2+).

It belongs to the glutaminyl-peptide cyclotransferase family.

It is found in the golgi apparatus membrane. It catalyses the reaction N-terminal L-glutaminyl-[peptide] = N-terminal 5-oxo-L-prolyl-[peptide] + NH4(+). Responsible for the biosynthesis of pyroglutamyl peptides. In Bos taurus (Bovine), this protein is Glutaminyl-peptide cyclotransferase-like protein (QPCTL).